The primary structure comprises 95 residues: Large ribosomal subunit protein bL28 (95 aa).

Residues 1 to 22 (MSRRCELTGKGPMTGNNVSHAN) are disordered.

Belongs to the bacterial ribosomal protein bL28 family.

The chain is Large ribosomal subunit protein bL28 from Ruegeria pomeroyi (strain ATCC 700808 / DSM 15171 / DSS-3) (Silicibacter pomeroyi).